Reading from the N-terminus, the 2363-residue chain is Highly reducing polyketide synthase cnsI (2363 aa).

The Ketosynthase family 3 (KS3) domain maps to 14 to 440; it reads PEPIAIIGMS…GSNAHAIVES (427 aa). Catalysis depends on for beta-ketoacyl synthase activity residues Cys-187, His-322, and His-363. Residues 546–854 form a malonyl-CoA:ACP transacylase (MAT) domain region; it reads LAFVFTGQGA…FLQVLKSINA (309 aa). Ser-638 acts as the For malonyltransferase activity in catalysis. Positions 938–1068 are N-terminal hotdog fold; sequence HDLLGSPMDF…GTFTLHYDAR (131 aa). The tract at residues 938 to 1224 is dehydratase (DH) domain; the sequence is HDLLGSPMDF…RLDSIASDVS (287 aa). The 309-residue stretch at 938–1246 folds into the PKS/mFAS DH domain; sequence HDLLGSPMDF…LGPVPMSKVP (309 aa). The active-site Proton acceptor; for dehydratase activity is the His-970. A C-terminal hotdog fold region spans residues 1089 to 1246; that stretch reads TAECETNRDA…LGPVPMSKVP (158 aa). Asp-1159 acts as the Proton donor; for dehydratase activity in catalysis. The enoylreductase (ER) domain stretch occupies residues 1669–1976; it reads GGQWVEDRQL…ARQTGISVAI (308 aa). The segment at 2001–2177 is catalytic ketoreductase (KRc) domain; sequence TYLLAGGLGM…PGHSIDIGLV (177 aa). Residues 2279–2357 form the Carrier domain; sequence EDASYVVNQA…VLSEKIAAQS (79 aa). Ser-2317 carries the O-(pantetheine 4'-phosphoryl)serine modification.

The protein operates within alkaloid biosynthesis. In terms of biological role, highly reducing polyketide synthase; part of the gene cluster that mediates the biosynthesis of communesins, a prominent class of indole alkaloids with great potential as pharmaceuticals. Communesins are biosynthesized by the coupling of tryptamine and aurantioclavine, two building blocks derived from L-tryptophan. The L-tryptophan decarboxylase cnsB converts L-tryptophan to tryptamine, whereas the tryptophan dimethylallyltransferase cnsF converts L-tryptophan to 4-dimethylallyl tryptophan which is further transformed to aurantioclavine by the aurantioclavine synthase cnsA, probably aided by the catalase cnsD. The cytochrome P450 monooxygenase cnsC catalyzes the heterodimeric coupling between the two different indole moieties, tryptamine and aurantioclavine, to construct vicinal quaternary stereocenters and yield the heptacyclic communesin scaffold. The O-methyltransferase cnsE then methylates the communesin scaffold to produce communesin K, the simplest characterized communesin that contains the heptacyclic core. The dioxygenase cnsJ converts communesin K into communesin I. Acylation to introduce the hexadienyl group at position N16 of communesin I by the acyltransferase cnsK leads to the production of communesin B. The hexadienyl group is produced by the highly reducing polyketide synthase cnsI, before being hydrolytically removed from cnsI by the serine hydrolase cnsH, converted into hexadienyl-CoA by the CoA ligase cnsG, and then transferred to communesin I by cnsK. Surprisingly, cnsK may also be a promiscuous acyltransferase that can tolerate a range of acyl groups, including acetyl-, propionyl-, and butyryl-CoA, which lead to communesins A, G and H respectively. The roles of the alpha-ketoglutarate-dependent dioxygenases cnsM and cnsP have still to be determined. The sequence is that of Highly reducing polyketide synthase cnsI from Penicillium expansum (Blue mold rot fungus).